We begin with the raw amino-acid sequence, 252 residues long: Imidazole glycerol phosphate synthase subunit HisF (252 aa).

Active-site residues include Asp11 and Asp130.

It belongs to the HisA/HisF family. In terms of assembly, heterodimer of HisH and HisF.

It localises to the cytoplasm. The catalysed reaction is 5-[(5-phospho-1-deoxy-D-ribulos-1-ylimino)methylamino]-1-(5-phospho-beta-D-ribosyl)imidazole-4-carboxamide + L-glutamine = D-erythro-1-(imidazol-4-yl)glycerol 3-phosphate + 5-amino-1-(5-phospho-beta-D-ribosyl)imidazole-4-carboxamide + L-glutamate + H(+). The protein operates within amino-acid biosynthesis; L-histidine biosynthesis; L-histidine from 5-phospho-alpha-D-ribose 1-diphosphate: step 5/9. IGPS catalyzes the conversion of PRFAR and glutamine to IGP, AICAR and glutamate. The HisF subunit catalyzes the cyclization activity that produces IGP and AICAR from PRFAR using the ammonia provided by the HisH subunit. The sequence is that of Imidazole glycerol phosphate synthase subunit HisF from Paramagnetospirillum magneticum (strain ATCC 700264 / AMB-1) (Magnetospirillum magneticum).